We begin with the raw amino-acid sequence, 638 residues long: Ubiquitin-like-specific protease 2 (638 aa).

Over residues 1-12 (MRDSKDALDDKS) the composition is skewed to basic and acidic residues. Disordered stretches follow at residues 1–79 (MRDS…PKHL) and 238–314 (PQKT…TSND). A compositionally biased stretch (polar residues) spans 238-249 (PQKTVRSIVKQT). Residues 250–264 (SSPHSSKMPKHSLPS) show a composition bias toward low complexity. Residues 267 to 314 (TPFNSNSGDSLLSRIKNSNQSSSERPTANNGAQEQNQSSSSAGNTSND) show a composition bias toward polar residues. Active-site residues include H440 and D494. Position 526 is a phosphothreonine (T526). Residue C544 is part of the active site. The segment covering 610 to 619 (NERQSLSSGS) has biased composition (polar residues). The tract at residues 610–638 (NERQSLSSGSNDEEDKENDDDLAILPITN) is disordered. A compositionally biased stretch (acidic residues) spans 620–631 (NDEEDKENDDDL).

The protein belongs to the peptidase C48 family.

It localises to the nucleus. This Schizosaccharomyces pombe (strain 972 / ATCC 24843) (Fission yeast) protein is Ubiquitin-like-specific protease 2 (ulp2).